A 498-amino-acid polypeptide reads, in one-letter code: 3-octaprenyl-4-hydroxybenzoate carboxy-lyase (498 aa).

Position 175 (N175) interacts with Mn(2+). Residues 178 to 180, 192 to 194, and 197 to 198 each bind prenylated FMN; these read IYR, RWL, and RG. A Mn(2+)-binding site is contributed by E241. The active-site Proton donor is the D290.

The protein belongs to the UbiD family. Homohexamer. Requires prenylated FMN as cofactor. Mn(2+) serves as cofactor.

It is found in the cell membrane. It catalyses the reaction a 4-hydroxy-3-(all-trans-polyprenyl)benzoate + H(+) = a 2-(all-trans-polyprenyl)phenol + CO2. It participates in cofactor biosynthesis; ubiquinone biosynthesis. Functionally, catalyzes the decarboxylation of 3-octaprenyl-4-hydroxy benzoate to 2-octaprenylphenol, an intermediate step in ubiquinone biosynthesis. This chain is 3-octaprenyl-4-hydroxybenzoate carboxy-lyase, found in Pectobacterium atrosepticum (strain SCRI 1043 / ATCC BAA-672) (Erwinia carotovora subsp. atroseptica).